Reading from the N-terminus, the 795-residue chain is Phenylalanine--tRNA ligase beta subunit (795 aa).

The region spanning 39–148 (AGQFHGVVVG…IDAPLGVDLR (110 aa)) is the tRNA-binding domain. The 76-residue stretch at 401-476 (PQSATITLRR…RIYGYNNIPD (76 aa)) folds into the B5 domain. 4 residues coordinate Mg(2+): aspartate 454, aspartate 460, glutamate 463, and glutamate 464. The region spanning 701 to 794 (SRFPSNRRDI…LKQRFQASLR (94 aa)) is the FDX-ACB domain.

Belongs to the phenylalanyl-tRNA synthetase beta subunit family. Type 1 subfamily. As to quaternary structure, tetramer of two alpha and two beta subunits. Requires Mg(2+) as cofactor.

It localises to the cytoplasm. It catalyses the reaction tRNA(Phe) + L-phenylalanine + ATP = L-phenylalanyl-tRNA(Phe) + AMP + diphosphate + H(+). This Photorhabdus laumondii subsp. laumondii (strain DSM 15139 / CIP 105565 / TT01) (Photorhabdus luminescens subsp. laumondii) protein is Phenylalanine--tRNA ligase beta subunit.